The following is a 44-amino-acid chain: Metallothionein-4 (44 aa).

Belongs to the metallothionein superfamily. Type 5 family.

In terms of biological role, this protein binds cations of several transition elements. Thought to be involved in metal ion homeostasis. The protein is Metallothionein-4 (MtnD) of Drosophila melanogaster (Fruit fly).